A 419-amino-acid polypeptide reads, in one-letter code: UDP-N-acetylglucosamine 1-carboxyvinyltransferase (419 aa).

A phosphoenolpyruvate-binding site is contributed by 22–23 (KN). Arg91 is a UDP-N-acetyl-alpha-D-glucosamine binding site. Catalysis depends on Cys115, which acts as the Proton donor. Cys115 is subject to 2-(S-cysteinyl)pyruvic acid O-phosphothioketal. UDP-N-acetyl-alpha-D-glucosamine is bound by residues 120-124 (RPVDL), 160-163 (KVSV), Asp305, and Val327.

The protein belongs to the EPSP synthase family. MurA subfamily.

The protein resides in the cytoplasm. The catalysed reaction is phosphoenolpyruvate + UDP-N-acetyl-alpha-D-glucosamine = UDP-N-acetyl-3-O-(1-carboxyvinyl)-alpha-D-glucosamine + phosphate. Its pathway is cell wall biogenesis; peptidoglycan biosynthesis. In terms of biological role, cell wall formation. Adds enolpyruvyl to UDP-N-acetylglucosamine. The polypeptide is UDP-N-acetylglucosamine 1-carboxyvinyltransferase (Shigella boydii serotype 18 (strain CDC 3083-94 / BS512)).